Consider the following 363-residue polypeptide: Dihydroorotate dehydrogenase (quinone) (363 aa).

FMN contacts are provided by residues 62–66 (AGYDK) and Thr-86. Lys-66 contacts substrate. 111-115 (NRLGF) is a binding site for substrate. 2 residues coordinate FMN: Asn-140 and Asn-171. Asn-171 contacts substrate. Catalysis depends on Ser-174, which acts as the Nucleophile. Asn-176 contributes to the substrate binding site. FMN contacts are provided by Lys-216 and Ser-244. Residue 245-246 (NT) participates in substrate binding. FMN is bound by residues Gly-266, Gly-295, and 316-317 (YT).

Belongs to the dihydroorotate dehydrogenase family. Type 2 subfamily. Monomer. The cofactor is FMN.

It is found in the cell membrane. It carries out the reaction (S)-dihydroorotate + a quinone = orotate + a quinol. Its pathway is pyrimidine metabolism; UMP biosynthesis via de novo pathway; orotate from (S)-dihydroorotate (quinone route): step 1/1. Catalyzes the conversion of dihydroorotate to orotate with quinone as electron acceptor. The polypeptide is Dihydroorotate dehydrogenase (quinone) (Chelativorans sp. (strain BNC1)).